The following is a 468-amino-acid chain: MNLRAGRLNSGMEDEAAEFTSSLTFDHHIFEADIECNMAHTRMLAHEGIIPEEVAAKIIDALESLREEGIEALDMDPSVEDIHMAVENYVTARIGEEAGFMHTGKSRNDQVATDLRLALRERIRTISRELLDFIDSISDLALDHTETVMVGYTHLQHAQPTTLGHHLMAYASSLRRDYERLQDTLKRVDQNPLGSAAMTTTSFPINRELTTRLLGFSDYMKNSMDAVSARDFIAETVFDLSMLAVNLSRISEEMILWSTHEFGIVEIPDEFSSTSSIMPQKKNPDVAEIARAKTSTVQGELVTILGIMKALPYTYNRDLQEVTPHLWRAVDTVLSMIRVVRGMLLGIRVNRNRALELAGANFATATDLADIIVRERGIPFRVAHRIVGRLVTRAIEDGLAPGDVDSVYLDEVSLEVTGRKLELDPELVEKALDPLENVRMRRIPGGPAPEMVRVAVEEMKSFIESERK.

It belongs to the lyase 1 family. Argininosuccinate lyase subfamily.

The protein localises to the cytoplasm. It catalyses the reaction 2-(N(omega)-L-arginino)succinate = fumarate + L-arginine. It functions in the pathway amino-acid biosynthesis; L-arginine biosynthesis; L-arginine from L-ornithine and carbamoyl phosphate: step 3/3. The sequence is that of Argininosuccinate lyase from Methanothermobacter thermautotrophicus (strain ATCC 29096 / DSM 1053 / JCM 10044 / NBRC 100330 / Delta H) (Methanobacterium thermoautotrophicum).